A 58-amino-acid polypeptide reads, in one-letter code: Large ribosomal subunit protein bL32 (58 aa).

Belongs to the bacterial ribosomal protein bL32 family.

In Synechococcus sp. (strain WH7803), this protein is Large ribosomal subunit protein bL32.